The following is a 206-amino-acid chain: Uridine kinase (206 aa).

Gly-9–Thr-16 provides a ligand contact to ATP.

Belongs to the uridine kinase family.

Its subcellular location is the cytoplasm. The catalysed reaction is uridine + ATP = UMP + ADP + H(+). The enzyme catalyses cytidine + ATP = CMP + ADP + H(+). Its pathway is pyrimidine metabolism; CTP biosynthesis via salvage pathway; CTP from cytidine: step 1/3. It functions in the pathway pyrimidine metabolism; UMP biosynthesis via salvage pathway; UMP from uridine: step 1/1. This Borrelia hermsii (strain HS1 / DAH) protein is Uridine kinase.